The primary structure comprises 72 residues: Toxin Acra II-3 (72 aa).

Residues 4-67 (PGNYPLDTRG…VWNAAKNYCK (64 aa)) enclose the LCN-type CS-alpha/beta domain. Cystine bridges form between C18–C41, C27–C46, and C31–C48.

Belongs to the long (3 C-C) scorpion toxin superfamily. Sodium channel inhibitor family. Beta subfamily. In terms of tissue distribution, expressed by the venom gland.

The protein resides in the secreted. Binds to sodium channels (Nav) and affects the channel activation process. The sequence is that of Toxin Acra II-3 from Androctonus crassicauda (Arabian fat-tailed scorpion).